Here is a 258-residue protein sequence, read N- to C-terminus: TLC domain-containing protein 4 A (258 aa).

The next 7 helical transmembrane spans lie at 8–28 (YLIS…YIWI), 49–71 (IEWT…SCYC), 92–112 (FILK…IIYY), 118–138 (WPII…IGLY), 144–164 (LTLL…MKWF), 170–190 (LENH…FIFI), and 217–237 (IIFF…YLVI). The region spanning 46–245 (SSKIEWTNKI…VIKGILKHLS (200 aa)) is the TLC domain.

The protein belongs to the TLCD4 family.

The protein resides in the membrane. The polypeptide is TLC domain-containing protein 4 A (tlcd4a) (Dictyostelium discoideum (Social amoeba)).